Here is a 375-residue protein sequence, read N- to C-terminus: 4,4'-diaponeurosporenoate glycosyltransferase (375 aa).

4 helical membrane passes run Trp3–Phe23, Phe164–Ser184, Ile277–Leu297, and Phe330–Ile350.

Belongs to the glycosyltransferase 2 family. CrtQ subfamily.

Its subcellular location is the cell membrane. The protein operates within carotenoid biosynthesis; staphyloxanthin biosynthesis; staphyloxanthin from farnesyl diphosphate: step 4/5. In terms of biological role, catalyzes the glycosylation of 4,4'-diaponeurosporenoate, i.e. the esterification of glucose at the C1'' position with the carboxyl group of 4,4'-diaponeurosporenic acid, to form glycosyl-4,4'-diaponeurosporenoate. This is a step in the biosynthesis of staphyloxanthin, an orange pigment present in most staphylococci strains. The polypeptide is 4,4'-diaponeurosporenoate glycosyltransferase (crtQ) (Staphylococcus aureus (strain MRSA252)).